A 442-amino-acid chain; its full sequence is Histidine--tRNA ligase (442 aa).

It belongs to the class-II aminoacyl-tRNA synthetase family. Homodimer.

It is found in the cytoplasm. It carries out the reaction tRNA(His) + L-histidine + ATP = L-histidyl-tRNA(His) + AMP + diphosphate + H(+). The sequence is that of Histidine--tRNA ligase from Helicobacter pylori (strain HPAG1).